Reading from the N-terminus, the 1019-residue chain is Type VI secretion system spike protein VgrG2b (1019 aa).

Residues 268–291 (AGRPFTESRLRGHRRDARVASVSG) are disordered. Histidine 935 contributes to the Zn(2+) binding site. The active site involves glutamate 936. 2 residues coordinate Zn(2+): histidine 939 and glutamate 983.

This sequence belongs to the VgrG protein family. In terms of assembly, interacts with Tla3; this interaction promotes Tle3 loading onto VgrG2b. Interacts with host gamma-tubulin ring complex components GCP1 and GCP4. Requires Zn(2+) as cofactor.

The protein localises to the secreted. In terms of biological role, part of the H2 type VI secretion system (H2-T6SS) specialized secretion system, which delivers several virulence factors in both prokaryotic and eukaryotic cells during infection. Forms the spike at the tip of the elongating tube probably formed by haemolysin co-regulated protein 2b/Hcp2b. Allows the delivery of the Tle3 antibacterial toxin to target cells where it exerts its toxicity. Additionally, acts directly as an effector and promotes internalization by interacting with the host gamma-tubulin ring complex. Elicits toxicity also in the bacterial periplasm and disrupts bacterial cell morphology. Toxicity is counteracted by a cognate immunity protein. The chain is Type VI secretion system spike protein VgrG2b (vgrG2b) from Pseudomonas aeruginosa (strain ATCC 15692 / DSM 22644 / CIP 104116 / JCM 14847 / LMG 12228 / 1C / PRS 101 / PAO1).